The chain runs to 499 residues: Glycerol kinase (499 aa).

Residue Thr-12 coordinates ADP. Positions 12, 13, and 14 each coordinate ATP. Position 12 (Thr-12) interacts with sn-glycerol 3-phosphate. ADP is bound at residue Arg-16. Residues Arg-82, Glu-83, Tyr-134, and Asp-243 each contribute to the sn-glycerol 3-phosphate site. Arg-82, Glu-83, Tyr-134, Asp-243, and Gln-244 together coordinate glycerol. Residues Thr-265 and Gly-308 each coordinate ADP. ATP is bound by residues Thr-265, Gly-308, Gln-312, and Gly-411. Gly-411 serves as a coordination point for ADP.

It belongs to the FGGY kinase family.

The catalysed reaction is glycerol + ATP = sn-glycerol 3-phosphate + ADP + H(+). The protein operates within polyol metabolism; glycerol degradation via glycerol kinase pathway; sn-glycerol 3-phosphate from glycerol: step 1/1. With respect to regulation, inhibited by fructose 1,6-bisphosphate (FBP). In terms of biological role, key enzyme in the regulation of glycerol uptake and metabolism. Catalyzes the phosphorylation of glycerol to yield sn-glycerol 3-phosphate. This is Glycerol kinase from Agrobacterium fabrum (strain C58 / ATCC 33970) (Agrobacterium tumefaciens (strain C58)).